Here is a 288-residue protein sequence, read N- to C-terminus: 4-diphosphocytidyl-2-C-methyl-D-erythritol kinase (288 aa).

Lys13 is a catalytic residue. 97–107 (PMGGGIGGGSS) contributes to the ATP binding site. Residue Asp139 is part of the active site.

It belongs to the GHMP kinase family. IspE subfamily.

It catalyses the reaction 4-CDP-2-C-methyl-D-erythritol + ATP = 4-CDP-2-C-methyl-D-erythritol 2-phosphate + ADP + H(+). It functions in the pathway isoprenoid biosynthesis; isopentenyl diphosphate biosynthesis via DXP pathway; isopentenyl diphosphate from 1-deoxy-D-xylulose 5-phosphate: step 3/6. In terms of biological role, catalyzes the phosphorylation of the position 2 hydroxy group of 4-diphosphocytidyl-2C-methyl-D-erythritol. The protein is 4-diphosphocytidyl-2-C-methyl-D-erythritol kinase of Saccharophagus degradans (strain 2-40 / ATCC 43961 / DSM 17024).